Consider the following 1456-residue polypeptide: Putative 1-phosphatidylinositol-3-phosphate 5-kinase FAB1D (1456 aa).

Over residues 1–19 the composition is skewed to low complexity; the sequence is MTPSNSLSSSERSLSGECS. 6 disordered regions span residues 1–110, 533–592, 925–944, 967–987, 1003–1022, and 1137–1159; these read MTPS…EVDG, PVSV…NDIE, ENDNKVSDSGSNGGIDTPLV, VPEDNESQTLCSSSPDTTSPI, NGQEADKSIPVTGESLDDEV, and NNQDSKQTDRDVSRFSSESTNRL. Positions 43–57 are enriched in basic and acidic residues; sequence ELTKEVKVDRLERKS. The segment covering 86–110 has biased composition (acidic residues); the sequence is REDDSDDVPVWEPPEPENPEDEVDG. A compositionally biased stretch (low complexity) spans 533 to 544; it reads PVSVDTDVSTTS. The segment covering 973 to 987 has biased composition (polar residues); the sequence is SQTLCSSSPDTTSPI. The 329-residue stretch at 1115–1443 folds into the PIPK domain; sequence NNEESKKPLS…RFRKFMKTHF (329 aa). Polar residues predominate over residues 1150–1159; it reads RFSSESTNRL.

Component of the PI(3,5)P2 regulatory complex at least composed of ATG18, SAC/FIG4, FAB1 and VAC14. The cofactor is Mg(2+). Requires Mn(2+) as cofactor.

It carries out the reaction a 1,2-diacyl-sn-glycero-3-phospho-(1D-myo-inositol-3-phosphate) + ATP = a 1,2-diacyl-sn-glycero-3-phospho-(1D-myo-inositol-3,5-bisphosphate) + ADP + H(+). Functionally, the PI(3,5)P2 regulatory complex regulates both the synthesis and turnover of phosphatidylinositol 3,5-bisphosphate (PtdIns(3,5)P2). Catalyzes the phosphorylation of phosphatidylinositol 3-phosphate on the fifth hydroxyl of the myo-inositol ring, to form phosphatidylinositol 3,5-bisphosphate. This is Putative 1-phosphatidylinositol-3-phosphate 5-kinase FAB1D (FAB1D) from Arabidopsis thaliana (Mouse-ear cress).